A 211-amino-acid chain; its full sequence is Nucleoside triphosphate pyrophosphatase (211 aa).

D76 acts as the Proton acceptor in catalysis.

Belongs to the Maf family. It depends on a divalent metal cation as a cofactor.

The protein resides in the cytoplasm. The enzyme catalyses a ribonucleoside 5'-triphosphate + H2O = a ribonucleoside 5'-phosphate + diphosphate + H(+). The catalysed reaction is a 2'-deoxyribonucleoside 5'-triphosphate + H2O = a 2'-deoxyribonucleoside 5'-phosphate + diphosphate + H(+). In terms of biological role, nucleoside triphosphate pyrophosphatase. May have a dual role in cell division arrest and in preventing the incorporation of modified nucleotides into cellular nucleic acids. The sequence is that of Nucleoside triphosphate pyrophosphatase from Saccharopolyspora erythraea (strain ATCC 11635 / DSM 40517 / JCM 4748 / NBRC 13426 / NCIMB 8594 / NRRL 2338).